We begin with the raw amino-acid sequence, 145 residues long: Brain and acute leukemia cytoplasmic protein (145 aa).

The N-myristoyl glycine moiety is linked to residue G2. C3 is lipidated: S-palmitoyl cysteine. The tract at residues 3–35 (CGGSRADAIEPRYYESWTRETESTWLTYTDSDA) is interaction with CAMK2A. The tract at residues 27 to 120 (WLTYTDSDAP…KRDAKRTSAK (94 aa)) is disordered. The span at 83 to 106 (CGTQCPNPQSLGSGPLTQKQNGLR) shows a compositional bias: polar residues. The segment covering 108–119 (TEAKRDAKRTSA) has biased composition (basic and acidic residues).

As to quaternary structure, interacts with CAMK2A. In terms of processing, palmitoylation and myristoylation target the protein to the lipid rafts. Expressed in the brain.

It is found in the cytoplasm. It localises to the synapse. Its subcellular location is the synaptosome. The protein resides in the membrane raft. The protein localises to the postsynaptic density. May play a synaptic role at the postsynaptic lipid rafts possibly through interaction with CAMK2A. The polypeptide is Brain and acute leukemia cytoplasmic protein (BAALC) (Sus scrofa (Pig)).